We begin with the raw amino-acid sequence, 452 residues long: UPF0210 protein CHY_1509 (452 aa).

Belongs to the UPF0210 family. As to quaternary structure, homodimer.

The chain is UPF0210 protein CHY_1509 from Carboxydothermus hydrogenoformans (strain ATCC BAA-161 / DSM 6008 / Z-2901).